An 84-amino-acid polypeptide reads, in one-letter code: Seminal ribonuclease (84 aa).

Intrachain disulfides connect Cys-10-Cys-65, Cys-28-Cys-80, and Cys-35-Cys-42. Substrate-binding positions include Lys-11–Thr-15, Lys-36, and Arg-55.

It belongs to the pancreatic ribonuclease family. Homodimer; disulfide-linked.

It localises to the secreted. It carries out the reaction an [RNA] containing cytidine + H2O = an [RNA]-3'-cytidine-3'-phosphate + a 5'-hydroxy-ribonucleotide-3'-[RNA].. The enzyme catalyses an [RNA] containing uridine + H2O = an [RNA]-3'-uridine-3'-phosphate + a 5'-hydroxy-ribonucleotide-3'-[RNA].. The polypeptide is Seminal ribonuclease (SRN) (Giraffa camelopardalis (Giraffe)).